The sequence spans 173 residues: Crossover junction endodeoxyribonuclease RuvC (173 aa).

Active-site residues include Asp8, Glu67, and Asp139. Asp8, Glu67, and Asp139 together coordinate Mg(2+).

This sequence belongs to the RuvC family. In terms of assembly, homodimer which binds Holliday junction (HJ) DNA. The HJ becomes 2-fold symmetrical on binding to RuvC with unstacked arms; it has a different conformation from HJ DNA in complex with RuvA. In the full resolvosome a probable DNA-RuvA(4)-RuvB(12)-RuvC(2) complex forms which resolves the HJ. The cofactor is Mg(2+).

It is found in the cytoplasm. The enzyme catalyses Endonucleolytic cleavage at a junction such as a reciprocal single-stranded crossover between two homologous DNA duplexes (Holliday junction).. Its function is as follows. The RuvA-RuvB-RuvC complex processes Holliday junction (HJ) DNA during genetic recombination and DNA repair. Endonuclease that resolves HJ intermediates. Cleaves cruciform DNA by making single-stranded nicks across the HJ at symmetrical positions within the homologous arms, yielding a 5'-phosphate and a 3'-hydroxyl group; requires a central core of homology in the junction. The consensus cleavage sequence is 5'-(A/T)TT(C/G)-3'. Cleavage occurs on the 3'-side of the TT dinucleotide at the point of strand exchange. HJ branch migration catalyzed by RuvA-RuvB allows RuvC to scan DNA until it finds its consensus sequence, where it cleaves and resolves the cruciform DNA. The protein is Crossover junction endodeoxyribonuclease RuvC of Klebsiella pneumoniae (strain 342).